We begin with the raw amino-acid sequence, 259 residues long: Bidirectional sugar transporter SWEET6a (259 aa).

The Extracellular segment spans residues 1–9 (MISPDAARN). Residues 10–30 (VVGIIGNVISFGLFLAPVPTF) form a helical membrane-spanning segment. A MtN3/slv 1 domain is found at 10 to 98 (VVGIIGNVIS…IFFLYSPNKK (89 aa)). Residues 31 to 45 (WRICKRKDVEEFKAD) lie on the Cytoplasmic side of the membrane. Residues 46 to 66 (PYLATLLNCMLWVFYGIPVVH) form a helical membrane-spanning segment. The Extracellular portion of the chain corresponds to 67 to 69 (PNS). The chain crosses the membrane as a helical span at residues 70–90 (ILVVTINGIGLLVEGTYLLIF). Residues 91-103 (FLYSPNKKRLRMC) are Cytoplasmic-facing. The chain crosses the membrane as a helical span at residues 104 to 124 (AVLGVELVFMLAVILGVLLGA). Residues 125-131 (HTHEKRS) lie on the Extracellular side of the membrane. A helical transmembrane segment spans residues 132–152 (MIVGILCVFFGSIMYFSPLTI). The MtN3/slv 2 domain occupies 133-216 (IVGILCVFFG…LILYACYYRT (84 aa)). Residues 153-165 (MGKVIKTKSVEYM) are Cytoplasmic-facing. A helical membrane pass occupies residues 166-186 (PFFLSLVCFLNGVCWTAYALI). The Extracellular portion of the chain corresponds to 187–189 (RFD). The chain crosses the membrane as a helical span at residues 190–210 (IYVTIPNGLGALFGAIQLILY). Over 211–259 (ACYYRTTPKKTKAAKDVEMPSVVVSGTGAAAAAGGGNTGGGSISVTVER) the chain is Cytoplasmic.

This sequence belongs to the SWEET sugar transporter family. As to quaternary structure, forms homooligomers and/or heterooligomers.

It localises to the cell membrane. Functionally, mediates both low-affinity uptake and efflux of sugar across the plasma membrane. This is Bidirectional sugar transporter SWEET6a (SWEET6A) from Oryza sativa subsp. indica (Rice).